The chain runs to 348 residues: Cuticle collagen rol-6 (348 aa).

A disordered region spans residues 76-348; it reads GYGATGVQPP…SARRHRKFQL (273 aa). Residues 120–137 show a composition bias toward gly residues; the sequence is PGGGFPDGPFPNGGGPRG. Triple-helical region stretches follow at residues 152-178, 196-258, 261-284, and 288-323; these read GPAG…DGKD, GPLG…DGER, GRPG…TGRD, and GQSG…PGKD. A compositionally biased stretch (low complexity) spans 194–231; that stretch reads PQGPLGPQGPNGAPGLRGMRGARGQPGRPGRDGNPGMP. The segment covering 297-306 has biased composition (gly residues); it reads GLQGYGGAAG. Basic and acidic residues predominate over residues 322-338; the sequence is KDAEYCKCPGREGDAGR. Residues 339–348 are compositionally biased toward basic residues; the sequence is SARRHRKFQL.

This sequence belongs to the cuticular collagen family. Collagen polypeptide chains are complexed within the cuticle by disulfide bonds and other types of covalent cross-links. As to expression, localizes in stripes along the alae.

Functionally, nematode cuticles are composed largely of collagen-like proteins. The cuticle functions both as an exoskeleton and as a barrier to protect the worm from its environment. May play a role in cuticle remodeling in response to the environment. Involved in body morphogenesis. This chain is Cuticle collagen rol-6 (rol-6), found in Caenorhabditis elegans.